A 98-amino-acid polypeptide reads, in one-letter code: Large ribosomal subunit protein uL23 (98 aa).

This sequence belongs to the universal ribosomal protein uL23 family. In terms of assembly, part of the 50S ribosomal subunit. Contacts protein L29, and trigger factor when it is bound to the ribosome.

Its function is as follows. One of the early assembly proteins it binds 23S rRNA. One of the proteins that surrounds the polypeptide exit tunnel on the outside of the ribosome. Forms the main docking site for trigger factor binding to the ribosome. This is Large ribosomal subunit protein uL23 from Rickettsia felis (strain ATCC VR-1525 / URRWXCal2) (Rickettsia azadi).